An 82-amino-acid chain; its full sequence is UPF0729 protein C18orf32 homolog (82 aa).

The necessary for its localzation to the endoplasmic reticulum and lipid droplets stretch occupies residues M1–P37. Residues T46–D82 form a disordered region. Residues N54–V69 are compositionally biased toward polar residues. Basic and acidic residues predominate over residues R71–D82.

Belongs to the UPF0729 family.

Its subcellular location is the endoplasmic reticulum. The protein localises to the lipid droplet. The chain is UPF0729 protein C18orf32 homolog from Xenopus tropicalis (Western clawed frog).